The chain runs to 141 residues: Large ribosomal subunit protein uL11 (141 aa).

Residues 1-23 (MAKQVTGQAKFQVPGGQATPAPP) form a disordered region.

It belongs to the universal ribosomal protein uL11 family. Part of the ribosomal stalk of the 50S ribosomal subunit. Interacts with L10 and the large rRNA to form the base of the stalk. L10 forms an elongated spine to which L12 dimers bind in a sequential fashion forming a multimeric L10(L12)X complex. In terms of processing, one or more lysine residues are methylated.

Its function is as follows. Forms part of the ribosomal stalk which helps the ribosome interact with GTP-bound translation factors. This Rhodopirellula baltica (strain DSM 10527 / NCIMB 13988 / SH1) protein is Large ribosomal subunit protein uL11.